A 999-amino-acid chain; its full sequence is MKYATGTDNAMTSGISGQTNNSNSVSNEMQPTTSTPTAVHKEATSTATTTATYANGNPNSNANPSQSQPSNALFCEQVTTVTNLFEKWNDCERTVVMYALLKRLRYPSLKFLQYSIDSNLTQNLGTSQTNLSSVVIDINANNPVYLQNLLNAYKTFQPCDLLDAMSSSSSDKDSMPCYGSDFQITTSAQCDERKLYARKEDILHEVLNMLPLLKPGNDEAKLIYLTLIPVAVKDTMQQIVPTELVQQIFSYLLIHPAITSEDRRSLNIWLRHLEDHIQAAAAGLTNRSYFLQPSPQLVAGGSSTGSGSCSSSATSSSTASCSSVASSSMCPASGSRSSRTNDWQTIAPPSKQLQNKLAGDWRGSGGGSSSGSINPLCDNLNGITLNELASSQNSLGLSLEGSSSLVNGVVAGAGSMLGIGGGDDHDTSFSKNGTEILDFDPVTADMGEACSLASSSLCGRSGGNPVEDRSQPPPNLQQQLLQPPPYASILMGNVGDQFGEINRWSLDSKIAALKTRRSNSLTTQTISSCSSSSNSSVITVNDNCSNSTENLAQFANKPRSFSLSIEHQRGALINSGSDTRLDEFKPNYIKFHTRNVGMSGIGLWLKSLRLHKYIELFKNMTYEEMLLITEDFLQSVGVTKGASHKLALCIDKLKERANILNRVEQDLLTGQMELSTAVEELTNIVLTPMKPLESPGPPEENIGLRFLKVIDIVTNTLQQDPYAAQDDETLGVLMWILDRSIHNEAFMNHASQLKDLKFKLSKMKISMVPKMHHVKPAGVGPNNGNINKPRWNGKTRKCDTKNGSNDRINNRKNSNDMLNFSLNCLPHPLPHHSQQPPPPLPQFDYNGYGGGPSHQPQYKSSSYPSFMGNPQQQPPPPPPSKAHHHAQQMQQMLQQHNHFPALPQQTPPQSHRRSLNNLILVTGGPQQPQQMIFKPGQGVLTNNGSNDNLGLERNQQPQQQQQQRKLSGGVSSVEQQPKKTMAAVVMENLAKFDQHFTLF.

The span at 1–37 (MKYATGTDNAMTSGISGQTNNSNSVSNEMQPTTSTPT) shows a compositional bias: polar residues. Disordered stretches follow at residues 1-45 (MKYA…EATS), 50-69 (TATY…QSQP), and 321-370 (CSSV…GSSS). Over residues 321–338 (CSSVASSSMCPASGSRSS) the composition is skewed to low complexity. Residues Ser564 and Ser575 each carry the phosphoserine modification. Residues 583 to 763 (EFKPNYIKFH…KDLKFKLSKM (181 aa)) are interaction with cup. Residues 600-654 (GIGLWLKSLRLHKYIELFKNMTYEEMLLITEDFLQSVGVTKGASHKLALCIDKLK) form the SAM domain. Positions 773–892 (HVKPAGVGPN…HHHAQQMQQM (120 aa)) are disordered. 2 stretches are compositionally biased toward polar residues: residues 801 to 822 (KNGS…NFSL) and 854 to 864 (HQPQYKSSSYP). Ser972 is subject to Phosphoserine.

Belongs to the SMAUG family. As to quaternary structure, interacts with oskar (osk). Binds to the 3'-UTR of nos. Interacts with cup, which in turn recruits eIF4-E, leading to an indirect interaction between smg and eIF4-E that prevents mRNA translation.

The protein localises to the cytoplasm. Functionally, translation regulator that binds to the 3'-UTR of specific mRNAs such as nanos (nos) and prevent their translation. Prevents translation of unlocalized nos in the bulk cytoplasm via the recruitment of cup. The polypeptide is Protein Smaug (smg) (Drosophila yakuba (Fruit fly)).